Here is a 347-residue protein sequence, read N- to C-terminus: NADH-ubiquinone oxidoreductase chain 2 (347 aa).

The next 10 helical transmembrane spans lie at 1 to 21 (MNPL…LIVM), 25 to 45 (HWFM…PLLT), 67 to 87 (SMLL…WSIM), 111 to 131 (FHFW…LILL), 144 to 164 (MIMP…SIAI), 178 to 198 (IMAY…AYNP), 201 to 221 (TLLN…LLMI), 237 to 257 (LPLI…LPPL), 274 to 294 (SSII…YFYT), and 326 to 346 (LPLM…MPIL).

The protein belongs to the complex I subunit 2 family. In terms of assembly, core subunit of respiratory chain NADH dehydrogenase (Complex I) which is composed of 45 different subunits. Interacts with TMEM242.

Its subcellular location is the mitochondrion inner membrane. The enzyme catalyses a ubiquinone + NADH + 5 H(+)(in) = a ubiquinol + NAD(+) + 4 H(+)(out). Its function is as follows. Core subunit of the mitochondrial membrane respiratory chain NADH dehydrogenase (Complex I) which catalyzes electron transfer from NADH through the respiratory chain, using ubiquinone as an electron acceptor. Essential for the catalytic activity and assembly of complex I. The sequence is that of NADH-ubiquinone oxidoreductase chain 2 from Myotis simus (Velvety myotis).